A 407-amino-acid polypeptide reads, in one-letter code: Elongation factor Tu (407 aa).

The tr-type G domain occupies 10–217 (KPHVNVGTIG…TLDEYIPEPE (208 aa)). The interval 19–26 (GHVDHGKT) is G1. 19–26 (GHVDHGKT) serves as a coordination point for GTP. Residue threonine 26 participates in Mg(2+) binding. The segment at 60-64 (GITIA) is G2. The interval 81–84 (DCPG) is G3. Residues 81–85 (DCPGH) and 136–139 (NKAD) contribute to the GTP site. Residues 136 to 139 (NKAD) are G4. The segment at 184–186 (SAL) is G5.

This sequence belongs to the TRAFAC class translation factor GTPase superfamily. Classic translation factor GTPase family. EF-Tu/EF-1A subfamily. Monomer.

Its subcellular location is the cytoplasm. It carries out the reaction GTP + H2O = GDP + phosphate + H(+). Its function is as follows. GTP hydrolase that promotes the GTP-dependent binding of aminoacyl-tRNA to the A-site of ribosomes during protein biosynthesis. The chain is Elongation factor Tu from Teredinibacter turnerae (strain ATCC 39867 / T7901).